Consider the following 293-residue polypeptide: Ribosomal protein L11 methyltransferase (293 aa).

4 residues coordinate S-adenosyl-L-methionine: Thr-145, Gly-166, Asp-188, and Asn-230.

This sequence belongs to the methyltransferase superfamily. PrmA family.

The protein resides in the cytoplasm. It catalyses the reaction L-lysyl-[protein] + 3 S-adenosyl-L-methionine = N(6),N(6),N(6)-trimethyl-L-lysyl-[protein] + 3 S-adenosyl-L-homocysteine + 3 H(+). Its function is as follows. Methylates ribosomal protein L11. In Shewanella putrefaciens (strain CN-32 / ATCC BAA-453), this protein is Ribosomal protein L11 methyltransferase.